A 208-amino-acid polypeptide reads, in one-letter code: Cysteine-rich protein 2 (208 aa).

One can recognise an LIM zinc-binding 1 domain in the interval 5–57; sequence CPKCDKTVCFAEKVSSLGKDWHKFCLKCERCSKTLTPGGHAEHDGKPFCHKPC. At lysine 23 the chain carries N6-acetyllysine. A disordered region spans residues 98 to 119; sequence AEERKASGPPKGPSRASSVTTF. Serine 104 is subject to Phosphoserine. In terms of domain architecture, LIM zinc-binding 2 spans 126 to 178; that stretch reads CPRCSKKVYFAEKVTSLGKDWHRPCLHCERCGKTLTPGGHAEHDGQPYCHKPC. N6-acetyllysine is present on residues lysine 138 and lysine 144.

As to quaternary structure, interacts with TGFB1I1.

The chain is Cysteine-rich protein 2 (CRIP2) from Pongo abelii (Sumatran orangutan).